The primary structure comprises 237 residues: Purine nucleoside phosphorylase DeoD-type (237 aa).

His-4 serves as a coordination point for a purine D-ribonucleoside. Phosphate is bound by residues Gly-20, Arg-24, Arg-43, and 87–90 (RVGT). A purine D-ribonucleoside contacts are provided by residues 179–181 (EME) and 203–204 (SD). Residue Asp-204 is the Proton donor of the active site.

This sequence belongs to the PNP/UDP phosphorylase family. In terms of assembly, homohexamer; trimer of homodimers.

It carries out the reaction a purine D-ribonucleoside + phosphate = a purine nucleobase + alpha-D-ribose 1-phosphate. It catalyses the reaction a purine 2'-deoxy-D-ribonucleoside + phosphate = a purine nucleobase + 2-deoxy-alpha-D-ribose 1-phosphate. Catalyzes the reversible phosphorolytic breakdown of the N-glycosidic bond in the beta-(deoxy)ribonucleoside molecules, with the formation of the corresponding free purine bases and pentose-1-phosphate. This Exiguobacterium sp. (strain ATCC BAA-1283 / AT1b) protein is Purine nucleoside phosphorylase DeoD-type.